A 273-amino-acid polypeptide reads, in one-letter code: Probable cysteine-rich repeat secretory protein 6 (273 aa).

The N-terminal stretch at 1–21 (MTRIIDVSLFCFFLFSLGAMS) is a signal peptide. Gnk2-homologous domains follow at residues 22–122 (QPSQ…DNSF) and 128–241 (DSPA…ISAL).

It belongs to the cysteine-rich repeat secretory protein family.

Its subcellular location is the secreted. The polypeptide is Probable cysteine-rich repeat secretory protein 6 (CRRSP6) (Arabidopsis thaliana (Mouse-ear cress)).